The chain runs to 177 residues: Small ribosomal subunit protein bS21m (177 aa).

The N-terminal 17 residues, 1-17, are a transit peptide targeting the mitochondrion; the sequence is MLKSTLRLSRISLRRGF.

The protein belongs to the bacterial ribosomal protein bS21 family. In terms of assembly, component of the mitochondrial small ribosomal subunit (mt-SSU). Mature yeast 74S mitochondrial ribosomes consist of a small (37S) and a large (54S) subunit. The 37S small subunit contains a 15S ribosomal RNA (15S mt-rRNA) and 34 different proteins. The 54S large subunit contains a 21S rRNA (21S mt-rRNA) and 46 different proteins.

It is found in the mitochondrion. Its function is as follows. Component of the mitochondrial ribosome (mitoribosome), a dedicated translation machinery responsible for the synthesis of mitochondrial genome-encoded proteins, including at least some of the essential transmembrane subunits of the mitochondrial respiratory chain. The mitoribosomes are attached to the mitochondrial inner membrane and translation products are cotranslationally integrated into the membrane. The sequence is that of Small ribosomal subunit protein bS21m (MRP21) from Saccharomyces cerevisiae (strain ATCC 204508 / S288c) (Baker's yeast).